The primary structure comprises 204 residues: Acyl-homoserine-lactone synthase (204 aa).

Belongs to the autoinducer synthase family.

It carries out the reaction a fatty acyl-[ACP] + S-adenosyl-L-methionine = an N-acyl-L-homoserine lactone + S-methyl-5'-thioadenosine + holo-[ACP] + H(+). Required for the synthesis of acyl-HSL autoinducers that bind to SolR. This chain is Acyl-homoserine-lactone synthase (solI), found in Ralstonia solanacearum (Pseudomonas solanacearum).